The chain runs to 444 residues: Bifunctional protein GlmU (444 aa).

Residues 1–226 (MTDSTHRTTA…EAELAGVNSR (226 aa)) form a pyrophosphorylase region. UDP-N-acetyl-alpha-D-glucosamine contacts are provided by residues 13 to 16 (LAAG), Lys-27, Gln-75, and 80 to 81 (GT). Asp-103 serves as a coordination point for Mg(2+). UDP-N-acetyl-alpha-D-glucosamine contacts are provided by Gly-139, Glu-153, Asn-168, and Asn-224. Asn-224 serves as a coordination point for Mg(2+). Residues 227-247 (SELARAEATLQTRLRNAAMDA) form a linker region. The tract at residues 248–444 (GVTLVAPETV…QSLKARKEQG (197 aa)) is N-acetyltransferase. The UDP-N-acetyl-alpha-D-glucosamine site is built by Arg-313 and Lys-331. The active-site Proton acceptor is the His-343. UDP-N-acetyl-alpha-D-glucosamine contacts are provided by Tyr-346 and Asn-357. Residues Ala-360, 366–367 (NY), Ser-385, Ala-403, and Arg-420 each bind acetyl-CoA.

It in the N-terminal section; belongs to the N-acetylglucosamine-1-phosphate uridyltransferase family. The protein in the C-terminal section; belongs to the transferase hexapeptide repeat family. In terms of assembly, homotrimer. Mg(2+) is required as a cofactor.

It is found in the cytoplasm. It catalyses the reaction alpha-D-glucosamine 1-phosphate + acetyl-CoA = N-acetyl-alpha-D-glucosamine 1-phosphate + CoA + H(+). The catalysed reaction is N-acetyl-alpha-D-glucosamine 1-phosphate + UTP + H(+) = UDP-N-acetyl-alpha-D-glucosamine + diphosphate. It functions in the pathway nucleotide-sugar biosynthesis; UDP-N-acetyl-alpha-D-glucosamine biosynthesis; N-acetyl-alpha-D-glucosamine 1-phosphate from alpha-D-glucosamine 6-phosphate (route II): step 2/2. Its pathway is nucleotide-sugar biosynthesis; UDP-N-acetyl-alpha-D-glucosamine biosynthesis; UDP-N-acetyl-alpha-D-glucosamine from N-acetyl-alpha-D-glucosamine 1-phosphate: step 1/1. It participates in bacterial outer membrane biogenesis; LPS lipid A biosynthesis. Catalyzes the last two sequential reactions in the de novo biosynthetic pathway for UDP-N-acetylglucosamine (UDP-GlcNAc). The C-terminal domain catalyzes the transfer of acetyl group from acetyl coenzyme A to glucosamine-1-phosphate (GlcN-1-P) to produce N-acetylglucosamine-1-phosphate (GlcNAc-1-P), which is converted into UDP-GlcNAc by the transfer of uridine 5-monophosphate (from uridine 5-triphosphate), a reaction catalyzed by the N-terminal domain. The chain is Bifunctional protein GlmU from Gluconobacter oxydans (strain 621H) (Gluconobacter suboxydans).